The sequence spans 710 residues: Ephexin-1 (710 aa).

Basic and acidic residues-rich tracts occupy residues Met1–Lys11 and Glu26–Thr41. A disordered region spans residues Met1–Trp143. Residues Met1–Lys273 form a regulatory region; modulates activity toward RHOA, RAC1 and CDC42 region. 2 stretches are compositionally biased toward polar residues: residues Ala89 to Leu102 and Met127 to Asn136. The residue at position 179 (Tyr179) is a Phosphotyrosine. The segment at Arg194–Leu236 is disordered. Positions Asp213–Pro227 are enriched in acidic residues. In terms of domain architecture, DH spans Lys273–Gly457. The PH domain occupies Trp489 to Arg601. Residues Leu612–Asn673 enclose the SH3 domain. A compositionally biased stretch (basic and acidic residues) spans Val687–Lys699. The segment at Val687 to Gln710 is disordered. The span at Asp700 to Gln710 shows a compositional bias: basic residues.

As to quaternary structure, interacts with CDK5R1 and EPHA4; activated by EPHA4 through the CDK5 kinase. Src-dependent phosphorylation at Tyr-179 upon EPHA4 activation increases the guanine exchange factor activity toward RHOA. Phosphorylation by CDK5 upon EPHA4 activation by EFNA1 may regulate dendritic spine morphogenesis. As to expression, highly expressed in brain specifically in caudate nucleus and to a lower extent in amygdala and hippocampus. Also detected in lung.

The protein resides in the cytoplasm. It is found in the membrane. Its subcellular location is the cell projection. It localises to the growth cone. Acts as a guanine nucleotide exchange factor (GEF) which differentially activates the GTPases RHOA, RAC1 and CDC42. Plays a role in axon guidance regulating ephrin-induced growth cone collapse and dendritic spine morphogenesis. Upon activation by ephrin through EPHA4, the GEF activity switches toward RHOA resulting in its activation. Activated RHOA promotes cone retraction at the expense of RAC1- and CDC42-stimulated growth cone extension. This chain is Ephexin-1 (NGEF), found in Homo sapiens (Human).